The sequence spans 109 residues: Ferredoxin CarAc (109 aa).

A 2Fe-2S ferredoxin-type domain is found at 3–108; sequence AKVRVIFRAA…GLTLELPKAQ (106 aa). The [2Fe-2S] cluster site is built by Cys43, Cys49, Cys52, and Cys89.

Belongs to the adrenodoxin/putidaredoxin family. In terms of assembly, monomer. Carbazole 1,9a-dioxygenase complex consists of a terminal oxygenase component CarAa, a ferredoxin reductase component fdr and a ferredoxin component CarAc. [2Fe-2S] cluster serves as cofactor.

In terms of biological role, part of the multicomponent carbazole 1,9a-dioxygenase (CARDO), that converts carbazole (CAR) into 2-aminobiphenyl-2,3-diol. Acts as a mediator in the electron transfer from fdr to CarAa. The protein is Ferredoxin CarAc (carAc) of Sphingomonas sp.